The primary structure comprises 299 residues: KATNB1-like protein 1 (299 aa).

The Nuclear localization signal signature appears at 8–15 (VKKRNFSN). Ser56 bears the Phosphoserine mark.

As to quaternary structure, interacts with KATNA1 and KATNAL1; these interactions are competed by KATNB1 which has a higher affinity for them.

It localises to the nucleus. The protein resides in the cytoplasm. Its subcellular location is the cytoskeleton. The protein localises to the spindle pole. Its function is as follows. Regulates microtubule-severing activity of KATNAL1 in a concentration-dependent manner in vitro. The chain is KATNB1-like protein 1 (Katnbl1) from Mus musculus (Mouse).